The chain runs to 427 residues: 3-isopropylmalate dehydratase large subunit (427 aa).

[4Fe-4S] cluster-binding residues include cysteine 308, cysteine 368, and cysteine 371.

Belongs to the aconitase/IPM isomerase family. LeuC type 2 subfamily. In terms of assembly, heterodimer of LeuC and LeuD. [4Fe-4S] cluster serves as cofactor.

It carries out the reaction (2R,3S)-3-isopropylmalate = (2S)-2-isopropylmalate. The protein operates within amino-acid biosynthesis; L-leucine biosynthesis; L-leucine from 3-methyl-2-oxobutanoate: step 2/4. Its function is as follows. Catalyzes the isomerization between 2-isopropylmalate and 3-isopropylmalate, via the formation of 2-isopropylmaleate. The chain is 3-isopropylmalate dehydratase large subunit from Geobacter sulfurreducens (strain ATCC 51573 / DSM 12127 / PCA).